Here is a 495-residue protein sequence, read N- to C-terminus: MSDLSGEDVTVVGGGIGGLSAACYLADAGADVSLLEKNEQLGGRASRLEVDGFRFDMGPSWYLMPDVFERFFAYFGKEPRDYYDLQRLDPHYRIFFKDGDQIDVTGDNDEMAQKFEEYEPGAGEAFEEYLSTSERHYETAMNKFVYQDRSELRDWVDLDVMTAAPVGLQLIGTMQSHVEDYFEHPKLQQIMQYTLVFLGGSPRTTPALYNMMSHVDFNLGVYYPDGGVGAVVDGLVELGEELGVTYETDAEVEEISRRKEGFLVETVHGDTTHPDEVVVNADYAHAERELLPDHERQYDDDYWDDKTYAPSAFLMYMGVEGDVEPLEHHTLVLPTDWDPHFDDIFDEPAWPDDPAYYLCVPSKTDDSVAPDGHSNLFVLVPIAPGLHDGDEIRQEYREKVLADIADNTGVDLRDRIVYEKQFAVSDFGERYNATEGTALGLAHTLRQTALLRPNNRSSAVDGLYFTGSFTTPGIGVPMCLISGEHTAEALIEDIA.

This sequence belongs to the carotenoid/retinoid oxidoreductase family.

The enzyme catalyses dihydroisopentenyldehydrorhodopin + A = isopentenyldehydrorhodopin + AH2. The catalysed reaction is dihydrobisanhydrobacterioruberin + A = bisanhydrobacterioruberin + AH2. Its pathway is carotenoid biosynthesis. Functionally, involved in the biosynthesis of the acyclic C50 carotenoid bacterioruberin (BR). CrtD is involved in the desaturation reactions that form double bonds at C-3,4 of dihydroisopentenyldehydrorhodopin (DH-IDR) and C-3',4' of dihydrobisanhydrobacterioruberin (DH-BABR) to yield isopentenyld ehydrorhodopin (IDR) and bisanhydrobacterioruberin (BABR), respectively. This chain is Carotenoid 3,4-desaturase, found in Haloarcula japonica (strain ATCC 49778 / DSM 6131 / JCM 7785 / NBRC 101032 / NCIMB 13157 / TR-1).